Reading from the N-terminus, the 701-residue chain is Arachidonate 12-lipoxygenase, 12R-type (701 aa).

The region spanning 2–119 (ATYKVKVATG…TLSLREATGK (118 aa)) is the PLAT domain. A Lipoxygenase domain is found at 120 to 701 (TTADDTLPIL…PVLIENSISI (582 aa)). Positions 398, 403, 578, 582, and 701 each coordinate Fe cation.

Belongs to the lipoxygenase family. Requires Fe cation as cofactor.

It localises to the cytoplasm. The protein resides in the perinuclear region. It catalyses the reaction (5Z,8Z,11Z,14Z)-eicosatetraenoate + O2 = (12R)-hydroperoxy-(5Z,8Z,10E,14Z)-eicosatetraenoate. The catalysed reaction is N-[omega-(9Z,12Z)-octadecadienoyloxy]acyl-beta-D-glucosyl-(1&lt;-&gt;1)-octadecasphing-4E-enine + O2 = N-[omega-(9R)-hydroperoxy-(10E,12Z)-octadecadienoyloxy]acyl-beta-D-glucosyl-(1&lt;-&gt;1)-octadecasphing-4E-enine. It carries out the reaction a N-[omega-(9Z,12Z)-octadecadienoyloxy]-acylsphin-4E-enine + O2 = a N-[omega-(9R)-hydroperoxy-(10E,12Z)-octadecadienoyloxy]-acylsphin-4E-enine. The enzyme catalyses (6Z,9Z,12Z)-octadecatrienoate + O2 = 10-hydroperoxy-(6Z,8E,12Z)-octadecatrienoate. It catalyses the reaction (4Z,7Z,10Z,13Z,16Z,19Z)-docosahexaenoate + O2 = 14-hydroperoxy-(4Z,7Z,10Z,12E,16Z,19Z)-docosahexaenoate. The catalysed reaction is (8Z,11Z,14Z)-eicosatrienoate + O2 = (8Z,10E,14Z)-12-hydroperoxyeicosatrienoate. It carries out the reaction (5Z,8Z,11Z,14Z,17Z)-eicosapentaenoate + O2 = (5Z,7Z,8Z,10E,14Z,17Z)-12-hydroperoxyeicosapentaenoate. The enzyme catalyses (6Z,9Z,12Z)-octadecatrienoate + O2 = 10R-hydroperoxy-(6Z,8E,12Z)-octadecatrienoate. It catalyses the reaction 1-O-methyl-(5Z,8Z,11Z,14Z)-eicosatetraenoate + O2 = 1-O-methyl (5Z,8Z,10E,12R,14Z)-hydroperoxyiecosatetraenoate. The catalysed reaction is 1-O-methyl-(5Z,8Z,11Z,14Z)-eicosatetraenoate + O2 = 1-O-methyl-8-hydroperoxy-(5Z,9E,11Z,14Z)-eicosatetraenoate. It carries out the reaction 1-O-methyl-(5Z,8Z,11Z,14Z)-eicosatetraenoate + O2 = 1-O-methyl-(8R)-hydroperoxy-(5Z,9E,11Z,14Z)-eicosatrienoate. The enzyme catalyses 1-O-methyl-(9Z,12Z)-octadecadienoate + O2 = 1-O-methyl-(9R)-hydroperoxy-(10E,12Z)-octadecadienoate. It catalyses the reaction 1-O-methyl-20-hydroxy-(5Z,8Z,11Z,14Z)-eicosatetraenoate + O2 = 1-O-methyl-8-hydroperoxy-20-hydroxy-(5Z,9E,11Z,14Z)-eicosatetraenoate. The catalysed reaction is 1-O-methyl-20-hydroxy-(5Z,8Z,11Z,14Z)-eicosatetraenoate + O2 = 1-O-methyl-12-hydroperoxy-20-hydroxy-(5Z,8Z,10E,14Z)-eicosatetraenoate. It carries out the reaction 1-O-methyl-20-hydroxy-(5Z,8Z,11Z,14Z)-eicosatetraenoate + O2 = 1-O-methyl-9-hydroperoxy-20-hydroxy-(5Z,7E,11Z,14Z)-eicosatetraenoate. The enzyme catalyses 1-O-methyl-(9Z,12Z)-octadecadienoate + O2 = 1-O-methyl-(13S)-hydroperoxy-(9Z,11E)-octadecadienoate. Its pathway is lipid metabolism; hydroperoxy eicosatetraenoic acid biosynthesis. The protein operates within lipid metabolism; sphingolipid metabolism. Its activity is regulated as follows. Increased by calcium. In terms of biological role, catalyzes the regio and stereo-specific incorporation of a single molecule of dioxygen into free and esterified polyunsaturated fatty acids generating lipid hydroperoxides that can be further reduced to the corresponding hydroxy species. In the skin, acts upstream of ALOXE3 on the lineolate moiety of esterified omega-hydroxyacyl-sphingosine (EOS) ceramides to produce an epoxy-ketone derivative, a crucial step in the conjugation of omega-hydroxyceramide to membrane proteins. Therefore plays a crucial role in the synthesis of corneocytes lipid envelope and the establishment of the skin barrier to water loss. May also play a role in the regulation of the expression of airway mucins. The chain is Arachidonate 12-lipoxygenase, 12R-type from Rattus norvegicus (Rat).